Reading from the N-terminus, the 185-residue chain is MGDPLQDRTRRLLTDYILFCARAPNTPEPLPTSVEAALLRSVTSQIQQEHQDLFNSFRDYQGNRLELVTQMADELLSNDQEFNWGRLVMLLAFVGTLMNQDRTVKRRRDQRNRLLLERDCYLIVSLLYNRLTGRHRSWLEAHGGWDGFCQFFKNPLPPGFWRRLLIRAILSCFFATAIFYIWKCL.

The short motif at 76–95 (LSNDQEFNWGRLVMLLAFVG) is the BH1 element. The short motif at 138 to 149 (WLEAHGGWDGFC) is the BH2 element. Residues 160–182 (FWRRLLIRAILSCFFATAIFYIW) form a helical membrane-spanning segment.

Belongs to the Bcl-2 family. Interacts with BAX. Interacts with BCL2, BCL2L1/BCLX. Interacts with APAF1. Interacts with ITPR1, ITPR2 and ITPR3; the interaction with ITPR1 is increased in the presence of AHCLY1. Interacts with AHCYL1. Interacts with HIP1R (via ENTH and I/LWEQ domains). Interacts with CASP9. Interacts with BCL2L11/BIM. Interacts with BIK. Interacts with UBQLN4. Interacts with NME2/NM23-H2. Interacts with and PMAIP1/NOXA. Interacts with TPX2. Interacts with UBQLN1; in the cytoplasm. Interacts (via BH1 domain) with BECN1. Requires Ca(2+) as cofactor. Post-translationally, monoubiquitinated by UBQLN1; results in stabilization of BCL2L10 protein abundance and in relocalization from mitochondria to cytoplasm. As to expression, expressed in oligodendroglial lineage cells.

It localises to the mitochondrion. The protein resides in the nucleus membrane. Its subcellular location is the endoplasmic reticulum. It is found in the cytoplasm. The protein localises to the cytoskeleton. It localises to the spindle. Functionally, promotes cell survival by suppressing apoptosis induced by BAX but not BAK. Increases binding of AHCYL1/IRBIT to ITPR1. Reduces ITPR1-mediated calcium release from the endoplasmic reticulum cooperatively with AHCYL1/IRBIT under normal cellular conditions. Under apoptotic stress conditions, dissociates from ITPR1 and is displaced from mitochondria-associated endoplasmic reticulum membranes, leading to increased Ca(2+) transfer to mitochondria which promotes apoptosis. Required for the correct formation of the microtubule organizing center during oocyte cell division, potentially via regulation of protein abundance and localization of other microtubule organizing center components such as AURKA and TPX2. In Rattus norvegicus (Rat), this protein is Bcl-2-like protein 10.